The sequence spans 285 residues: Bifunctional protein FolD (285 aa).

NADP(+) is bound by residues 165-167 (GRS), Ser-190, and Ile-231.

This sequence belongs to the tetrahydrofolate dehydrogenase/cyclohydrolase family. Homodimer.

The catalysed reaction is (6R)-5,10-methylene-5,6,7,8-tetrahydrofolate + NADP(+) = (6R)-5,10-methenyltetrahydrofolate + NADPH. The enzyme catalyses (6R)-5,10-methenyltetrahydrofolate + H2O = (6R)-10-formyltetrahydrofolate + H(+). Its pathway is one-carbon metabolism; tetrahydrofolate interconversion. Functionally, catalyzes the oxidation of 5,10-methylenetetrahydrofolate to 5,10-methenyltetrahydrofolate and then the hydrolysis of 5,10-methenyltetrahydrofolate to 10-formyltetrahydrofolate. The sequence is that of Bifunctional protein FolD from Acetivibrio thermocellus (strain ATCC 27405 / DSM 1237 / JCM 9322 / NBRC 103400 / NCIMB 10682 / NRRL B-4536 / VPI 7372) (Clostridium thermocellum).